Here is a 324-residue protein sequence, read N- to C-terminus: MTDLIQRPRRLRKSPALRAMFEETTLSLNDLVLPIFVEEEIDDYKAVEAMPGVMRIPEKHLAREIERIANAGIRSVMTFGISHHTDETGSDAWREDGLVARMSRICKQTVPEMIVMSDTCFCEYTSHGHCGVLCEHGVDNDATLENLGKQAVVAAAAGADFIAPSAAMDGQVQAIRQALDAAGFKDTAIMSYSTKFASSFYGPFREAAGSALKGDRKSYQMNPMNRREAIRESLLDEAQGADCLMVKPAGAYLDIVRELRERTELPIGAYQVSGEYAMIKFAALAGAIDEEKVVLESLGSIKRAGADLIFSYFALDLAEKKILR.

Zn(2+) contacts are provided by cysteine 120, cysteine 122, and cysteine 130. The active-site Schiff-base intermediate with substrate is lysine 195. 5-aminolevulinate is bound by residues arginine 205 and arginine 216. Glutamate 232 is a binding site for Mg(2+). The Schiff-base intermediate with substrate role is filled by lysine 247. Residues serine 273 and tyrosine 312 each contribute to the 5-aminolevulinate site.

Belongs to the ALAD family. Homooctamer. Zn(2+) is required as a cofactor.

The enzyme catalyses 2 5-aminolevulinate = porphobilinogen + 2 H2O + H(+). Its pathway is porphyrin-containing compound metabolism; protoporphyrin-IX biosynthesis; coproporphyrinogen-III from 5-aminolevulinate: step 1/4. Allosteric enzyme. Stimulated by magnesium ions. Functionally, catalyzes an early step in the biosynthesis of tetrapyrroles. Binds two molecules of 5-aminolevulinate per subunit, each at a distinct site, and catalyzes their condensation to form porphobilinogen. In Escherichia coli (strain K12), this protein is Delta-aminolevulinic acid dehydratase (hemB).